Reading from the N-terminus, the 213-residue chain is Deoxyribose-phosphate aldolase (213 aa).

Asp89 functions as the Proton donor/acceptor in the catalytic mechanism. The Schiff-base intermediate with acetaldehyde role is filled by Lys151. The active-site Proton donor/acceptor is Lys180.

The protein belongs to the DeoC/FbaB aldolase family. DeoC type 1 subfamily.

The protein localises to the cytoplasm. The enzyme catalyses 2-deoxy-D-ribose 5-phosphate = D-glyceraldehyde 3-phosphate + acetaldehyde. The protein operates within carbohydrate degradation; 2-deoxy-D-ribose 1-phosphate degradation; D-glyceraldehyde 3-phosphate and acetaldehyde from 2-deoxy-alpha-D-ribose 1-phosphate: step 2/2. In terms of biological role, catalyzes a reversible aldol reaction between acetaldehyde and D-glyceraldehyde 3-phosphate to generate 2-deoxy-D-ribose 5-phosphate. The chain is Deoxyribose-phosphate aldolase from Finegoldia magna (strain ATCC 29328 / DSM 20472 / WAL 2508) (Peptostreptococcus magnus).